Here is a 136-residue protein sequence, read N- to C-terminus: Histone H3.3 (136 aa).

Residues methionine 1–tyrosine 42 form a disordered region. Position 5 is an N6,N6,N6-trimethyllysine; alternate (lysine 5). Position 5 is an N6,N6-dimethyllysine; alternate (lysine 5). N6-methyllysine; alternate occurs at positions 5 and 10. Lysine 10 bears the N6-acetyllysine; alternate mark. Position 11 is a phosphoserine (serine 11). Lysine 15 carries the post-translational modification N6,N6-dimethyllysine; alternate. Lysine 15, lysine 19, lysine 24, lysine 28, and lysine 37 each carry N6-acetyllysine; alternate. N6-methyllysine; alternate is present on residues lysine 19, lysine 24, lysine 28, and lysine 37. N6,N6,N6-trimethyllysine; alternate is present on residues lysine 28 and lysine 37. An N6,N6-dimethyllysine; alternate mark is found at lysine 28 and lysine 37. N6-acetyllysine occurs at positions 57 and 65. The residue at position 80 (lysine 80) is an N6,N6,N6-trimethyllysine; alternate. Lysine 80 is subject to N6,N6-dimethyllysine; alternate. An N6-methyllysine; alternate modification is found at lysine 80.

Belongs to the histone H3 family. In terms of assembly, the nucleosome is a histone octamer containing two molecules each of H2A, H2B, H3 and H4 assembled in one H3-H4 heterotetramer and two H2A-H2B heterodimers. The octamer wraps approximately 147 bp of DNA. Phosphorylated by IPL1 to form H3S10ph. H3S10ph promotes subsequent H3K14ac formation and is required for transcriptional activation through TBP recruitment to the promoters. Post-translationally, mono-, di- and trimethylated by the COMPASS complex to form H3K4me1/2/3. H3K4me activates gene expression by regulating transcription elongation and plays a role in telomere length maintenance. H3K4me enrichment correlates with transcription levels, and occurs in a 5' to 3' gradient with H3K4me3 enrichment at the 5'-end of genes, shifting to H3K4me2 and then H3K4me1. Methylated by SET2 to form H3K36me. H3K36me represses gene expression. Methylated by DOT1 to form H3K79me. H3K79me is required for association of SIR proteins with telomeric regions and for telomeric silencing. The COMPASS-mediated formation of H3K4me2/3 and the DOT1-mediated formation of H3K79me require H2BK123ub1. In terms of processing, acetylation of histone H3 leads to transcriptional activation. H3K14ac formation by GCN5 is promoted by H3S10ph. H3K14ac can also be formed by ESA1. H3K56ac formation occurs predominantly in newly synthesized H3 molecules during G1, S and G2/M of the cell cycle and may be involved in DNA repair.

It is found in the nucleus. It localises to the chromosome. In terms of biological role, core component of nucleosome. Nucleosomes wrap and compact DNA into chromatin, limiting DNA accessibility to the cellular machineries which require DNA as a template. Histones thereby play a central role in transcription regulation, DNA repair, DNA replication and chromosomal stability. DNA accessibility is regulated via a complex set of post-translational modifications of histones, also called histone code, and nucleosome remodeling. This chain is Histone H3.3 (HHT3), found in Candida albicans (strain SC5314 / ATCC MYA-2876) (Yeast).